A 25-amino-acid polypeptide reads, in one-letter code: AKKRAGNGCFGLKLDRIGSMSGLGC.

An intrachain disulfide couples C9 to C25.

In terms of tissue distribution, venom gland.

Its subcellular location is the secreted. In terms of biological role, snake venom natriuretic peptide that has a vasorelaxant activity in rat aortic strips and a diuretic potency in anesthetized rats. May act by activating natriuretic receptors (NPR1 and/or NPR2). This Crotalus atrox (Western diamondback rattlesnake) protein is C-type natriuretic peptide.